The primary structure comprises 411 residues: Probable protein S-acyltransferase 2 (411 aa).

Transmembrane regions (helical) follow at residues 56–76 (LTTAMIGGPALTFCIRMVFLI) and 85–105 (SLILLGALLLTVLDFTFLFLT). The DHHC domain occupies 160–210 (KFCDTCLLYRPPRASHCSICNNCVQRFDHHCPWVGQCIALRNYPYFICFIS). Cys-190 acts as the S-palmitoyl cysteine intermediate in catalysis. 2 helical membrane-spanning segments follow: residues 205–225 (FICFISTSTLLCLYVFVFSWV) and 245–265 (FVVLILYCFVVVWFVGGLTVF). Ser-405 is modified (phosphoserine).

This sequence belongs to the DHHC palmitoyltransferase family. As to expression, expressed in flowers and pollen.

Its subcellular location is the cytoplasmic vesicle membrane. The catalysed reaction is L-cysteinyl-[protein] + hexadecanoyl-CoA = S-hexadecanoyl-L-cysteinyl-[protein] + CoA. Palmitoyl acyltransferase. The sequence is that of Probable protein S-acyltransferase 2 (PAT02) from Arabidopsis thaliana (Mouse-ear cress).